The following is a 947-amino-acid chain: Protein translocase subunit SecA 1 (947 aa).

ATP-binding positions include Gln-83, 101 to 105 (GEGKT), and Asp-490. The tract at residues 860-947 (AKAQEQTGQG…KTSKPTRRRG (88 aa)) is disordered. Positions 925–934 (TRRERREAAR) are enriched in basic and acidic residues. Positions 935–947 (KQAKTSKPTRRRG) are enriched in basic residues.

Belongs to the SecA family. As to quaternary structure, monomer and homodimer. Part of the essential Sec protein translocation apparatus which comprises SecA, SecYEG and auxiliary proteins SecDF. Other proteins may also be involved.

It localises to the cell membrane. It is found in the cytoplasm. The enzyme catalyses ATP + H2O + cellular proteinSide 1 = ADP + phosphate + cellular proteinSide 2.. In terms of biological role, part of the Sec protein translocase complex. Interacts with the SecYEG preprotein conducting channel. Has a central role in coupling the hydrolysis of ATP to the transfer of proteins into and across the cell membrane, serving as an ATP-driven molecular motor driving the stepwise translocation of polypeptide chains across the membrane. This chain is Protein translocase subunit SecA 1, found in Mycobacterium sp. (strain KMS).